The following is a 427-amino-acid chain: 3-phosphoshikimate 1-carboxyvinyltransferase (427 aa).

3 residues coordinate 3-phosphoshikimate: Lys22, Ser23, and Arg27. Position 22 (Lys22) interacts with phosphoenolpyruvate. Phosphoenolpyruvate contacts are provided by Gly96 and Arg124. The 3-phosphoshikimate site is built by Ser170, Ser171, Gln172, Ser198, Asp314, Asn337, and Lys341. Residue Gln172 coordinates phosphoenolpyruvate. Catalysis depends on Asp314, which acts as the Proton acceptor. Phosphoenolpyruvate-binding residues include Arg345, Arg387, and Lys412.

It belongs to the EPSP synthase family. In terms of assembly, monomer.

The protein localises to the cytoplasm. The enzyme catalyses 3-phosphoshikimate + phosphoenolpyruvate = 5-O-(1-carboxyvinyl)-3-phosphoshikimate + phosphate. The protein operates within metabolic intermediate biosynthesis; chorismate biosynthesis; chorismate from D-erythrose 4-phosphate and phosphoenolpyruvate: step 6/7. Functionally, catalyzes the transfer of the enolpyruvyl moiety of phosphoenolpyruvate (PEP) to the 5-hydroxyl of shikimate-3-phosphate (S3P) to produce enolpyruvyl shikimate-3-phosphate and inorganic phosphate. This is 3-phosphoshikimate 1-carboxyvinyltransferase from Tolumonas auensis (strain DSM 9187 / NBRC 110442 / TA 4).